Here is a 497-residue protein sequence, read N- to C-terminus: Glycerol kinase (497 aa).

Thr12 lines the ADP pocket. Residues Thr12, Thr13, and Ser14 each coordinate ATP. Residue Thr12 coordinates sn-glycerol 3-phosphate. Arg16 is a binding site for ADP. Arg82, Glu83, Tyr134, and Asp243 together coordinate sn-glycerol 3-phosphate. The glycerol site is built by Arg82, Glu83, Tyr134, Asp243, and Gln244. Positions 265 and 308 each coordinate ADP. Residues Thr265, Gly308, Gln312, and Gly411 each contribute to the ATP site. Gly411 serves as a coordination point for ADP.

It belongs to the FGGY kinase family.

It catalyses the reaction glycerol + ATP = sn-glycerol 3-phosphate + ADP + H(+). Its pathway is polyol metabolism; glycerol degradation via glycerol kinase pathway; sn-glycerol 3-phosphate from glycerol: step 1/1. Its activity is regulated as follows. Inhibited by fructose 1,6-bisphosphate (FBP). Key enzyme in the regulation of glycerol uptake and metabolism. Catalyzes the phosphorylation of glycerol to yield sn-glycerol 3-phosphate. The chain is Glycerol kinase from Rhizobium meliloti (strain 1021) (Ensifer meliloti).